We begin with the raw amino-acid sequence, 511 residues long: Glucans biosynthesis protein G (511 aa).

Positions 1–22 (MMKMRWLSAAVMLTLYTSSSWA) are cleaved as a signal peptide.

This sequence belongs to the OpgD/OpgG family.

It localises to the periplasm. The protein operates within glycan metabolism; osmoregulated periplasmic glucan (OPG) biosynthesis. Functionally, involved in the biosynthesis of osmoregulated periplasmic glucans (OPGs). The chain is Glucans biosynthesis protein G from Shigella dysenteriae serotype 1 (strain Sd197).